A 184-amino-acid polypeptide reads, in one-letter code: Probable chemoreceptor glutamine deamidase CheD (184 aa).

This sequence belongs to the CheD family.

The enzyme catalyses L-glutaminyl-[protein] + H2O = L-glutamyl-[protein] + NH4(+). Functionally, probably deamidates glutamine residues to glutamate on methyl-accepting chemotaxis receptors (MCPs), playing an important role in chemotaxis. The polypeptide is Probable chemoreceptor glutamine deamidase CheD (Rhizobium rhizogenes (strain K84 / ATCC BAA-868) (Agrobacterium radiobacter)).